We begin with the raw amino-acid sequence, 171 residues long: Protein phosphatase 1 regulatory subunit 1A (171 aa).

Methionine 1 carries the N-acetylmethionine modification. Residues 1–171 are disordered; sequence MEQDNSPRKI…PLDSKGANSV (171 aa). Residues 9 to 12 are essential for activity; it reads KIQF. Residues 19–29 are compositionally biased toward basic and acidic residues; that stretch reads PHLDPEAAEQI. Position 35 is a phosphothreonine; by PKA (threonine 35). The tract at residues 42–54 is essential for activity; it reads TSDQSSPEIDEDR. Residues serine 43, serine 46, serine 47, and serine 67 each carry the phosphoserine modification. Over residues 135 to 157 the composition is skewed to basic and acidic residues; the sequence is KTAECIPKTHERGSKEPSTKEPS. The interval 143 to 171 is interaction with PPP1R15A; that stretch reads THERGSKEPSTKEPSTHIPPLDSKGANSV.

It belongs to the protein phosphatase inhibitor 1 family. In terms of assembly, interacts with PPP1R15A. In terms of processing, phosphorylation of Thr-35 is required for activity.

Its function is as follows. Inhibitor of protein-phosphatase 1. This protein may be important in hormonal control of glycogen metabolism. Hormones that elevate intracellular cAMP increase I-1 activity in many tissues. I-1 activation may impose cAMP control over proteins that are not directly phosphorylated by PKA. Following a rise in intracellular calcium, I-1 is inactivated by calcineurin (or PP2B). Does not inhibit type-2 phosphatases. This Homo sapiens (Human) protein is Protein phosphatase 1 regulatory subunit 1A (PPP1R1A).